Here is a 496-residue protein sequence, read N- to C-terminus: Putative ammonium transporter 1 member 5 (496 aa).

A run of 11 helical transmembrane segments spans residues 50–70 (LLFS…LCAG), 85–105 (VLDA…FAFG), 131–151 (FFLY…GSIA), 156–176 (FVAY…VVSH), 202–222 (FAGS…GALI), 246–266 (LVVL…PGSF), 284–306 (GIGR…TLFG), 314–334 (WNVT…TAGC), 336–356 (VVDP…LIGC), 369–389 (LEAA…VGLF), and 422–442 (LVQI…LFFI). Phosphoserine is present on S485.

The protein belongs to the ammonia transporter channel (TC 1.A.11.2) family.

It is found in the membrane. Involved in ammonium transport. In Arabidopsis thaliana (Mouse-ear cress), this protein is Putative ammonium transporter 1 member 5 (AMT1-5).